Here is a 169-residue protein sequence, read N- to C-terminus: Small ribosomal subunit protein uS5c (169 aa).

The S5 DRBM domain occupies 17-80 (WQERVIQVRR…TDGRKNLINI (64 aa)).

This sequence belongs to the universal ribosomal protein uS5 family. In terms of assembly, part of the 30S ribosomal subunit. Contacts protein S4.

It is found in the plastid. Its subcellular location is the chloroplast. In terms of biological role, with S4 and S12 plays an important role in translational accuracy. The protein is Small ribosomal subunit protein uS5c (rps5) of Guillardia theta (Cryptophyte).